The primary structure comprises 113 residues: Hydrogenase maturation factor HypA (113 aa).

Histidine 2 contacts Ni(2+). Zn(2+) contacts are provided by cysteine 70, cysteine 73, cysteine 86, and cysteine 88.

The protein belongs to the HypA/HybF family.

Functionally, involved in the maturation of [NiFe] hydrogenases. Required for nickel insertion into the metal center of the hydrogenase. In Trichormus variabilis (strain ATCC 29413 / PCC 7937) (Anabaena variabilis), this protein is Hydrogenase maturation factor HypA.